The primary structure comprises 1320 residues: Bifunctional protein PutA (1320 aa).

The interval 228-574 (LSRSLNRIIG…SFVNRIADAT (347 aa)) is proline dehydrogenase. An aldehyde dehydrogenase region spans residues 653–1119 (QPVADGEMTP…LAHRPPNALN (467 aa)). Residues Glu-883 and Cys-917 contribute to the active site.

The protein in the N-terminal section; belongs to the proline dehydrogenase family. It in the C-terminal section; belongs to the aldehyde dehydrogenase family. The cofactor is FAD.

It carries out the reaction L-proline + a quinone = (S)-1-pyrroline-5-carboxylate + a quinol + H(+). The enzyme catalyses L-glutamate 5-semialdehyde + NAD(+) + H2O = L-glutamate + NADH + 2 H(+). Its pathway is amino-acid degradation; L-proline degradation into L-glutamate; L-glutamate from L-proline: step 1/2. It participates in amino-acid degradation; L-proline degradation into L-glutamate; L-glutamate from L-proline: step 2/2. Its function is as follows. Oxidizes proline to glutamate for use as a carbon and nitrogen source and also function as a transcriptional repressor of the put operon. This chain is Bifunctional protein PutA (putA), found in Salmonella typhimurium (strain LT2 / SGSC1412 / ATCC 700720).